Here is a 288-residue protein sequence, read N- to C-terminus: Probable prolyl 4-hydroxylase 9 (288 aa).

Over 1 to 12 (MKSRLKSYRRKK) the chain is Cytoplasmic. Residues 13–33 (LGLATVIVFCSLCFLFGFYGS) form a helical; Signal-anchor for type II membrane protein membrane-spanning segment. Topologically, residues 34–288 (TLLSQNVPRV…KWIRDQDQEE (255 aa)) are lumenal. In terms of domain architecture, Fe2OG dioxygenase spans 164-283 (HGESFNILRY…KWVATKWIRD (120 aa)). Fe cation-binding residues include histidine 182 and aspartate 184. N-linked (GlcNAc...) asparagine glycosylation is found at asparagine 221 and asparagine 255. Histidine 264 is a binding site for Fe cation. Lysine 274 contributes to the 2-oxoglutarate binding site.

This sequence belongs to the P4HA family. Fe(2+) serves as cofactor. It depends on L-ascorbate as a cofactor.

The protein resides in the endoplasmic reticulum membrane. Its subcellular location is the golgi apparatus. The catalysed reaction is L-prolyl-[collagen] + 2-oxoglutarate + O2 = trans-4-hydroxy-L-prolyl-[collagen] + succinate + CO2. Catalyzes the post-translational formation of 4-hydroxyproline in -Xaa-Pro-Gly- sequences in proline-rich peptide sequences of plant glycoproteins and other proteins. Hydroxyprolines are important constituent of many plant cell wall glycoproteins such as extensins, hydroxyproline-rich glycoproteins, lectins and arabinogalactan proteins. This is Probable prolyl 4-hydroxylase 9 from Arabidopsis thaliana (Mouse-ear cress).